The primary structure comprises 328 residues: Biotin synthase (328 aa).

A Radical SAM core domain is found at F53–R282. Residues C71, C75, and C78 each contribute to the [4Fe-4S] cluster site. [2Fe-2S] cluster is bound by residues S115, C147, C207, and R277.

This sequence belongs to the radical SAM superfamily. Biotin synthase family. As to quaternary structure, homodimer. The cofactor is [4Fe-4S] cluster. It depends on [2Fe-2S] cluster as a cofactor.

The enzyme catalyses (4R,5S)-dethiobiotin + (sulfur carrier)-SH + 2 reduced [2Fe-2S]-[ferredoxin] + 2 S-adenosyl-L-methionine = (sulfur carrier)-H + biotin + 2 5'-deoxyadenosine + 2 L-methionine + 2 oxidized [2Fe-2S]-[ferredoxin]. It participates in cofactor biosynthesis; biotin biosynthesis; biotin from 7,8-diaminononanoate: step 2/2. Catalyzes the conversion of dethiobiotin (DTB) to biotin by the insertion of a sulfur atom into dethiobiotin via a radical-based mechanism. The polypeptide is Biotin synthase (Desulforudis audaxviator (strain MP104C)).